Reading from the N-terminus, the 433-residue chain is Probable mannose-6-phosphate isomerase (433 aa).

4 residues coordinate Zn(2+): Gln103, His105, Glu130, and His277. Residue Arg296 is part of the active site.

It belongs to the mannose-6-phosphate isomerase type 1 family. The cofactor is Zn(2+).

It is found in the cytoplasm. The catalysed reaction is D-mannose 6-phosphate = D-fructose 6-phosphate. Its pathway is nucleotide-sugar biosynthesis; GDP-alpha-D-mannose biosynthesis; alpha-D-mannose 1-phosphate from D-fructose 6-phosphate: step 1/2. Its function is as follows. Involved in the synthesis of the GDP-mannose and dolichol-phosphate-mannose required for a number of critical mannosyl transfer reactions. The chain is Probable mannose-6-phosphate isomerase (PMIH) from Echinococcus multilocularis (Fox tapeworm).